Reading from the N-terminus, the 283-residue chain is Protease HtpX (283 aa).

The next 2 membrane-spanning stretches (helical) occupy residues 4–24 and 33–53; these read ILLF…ILSV and GGIL…SLFL. Residue His-139 coordinates Zn(2+). Glu-140 is a catalytic residue. Residue His-143 coordinates Zn(2+). Transmembrane regions (helical) follow at residues 147–167 and 190–210; these read GDMV…IFLS and IYFL…SIIA. Glu-218 is a binding site for Zn(2+).

The protein belongs to the peptidase M48B family. Requires Zn(2+) as cofactor.

The protein localises to the cell inner membrane. This is Protease HtpX from Haemophilus influenzae (strain PittEE).